The primary structure comprises 424 residues: Interleukin-13 receptor subunit alpha-1 (424 aa).

Positions Met1–Ala25 are cleaved as a signal peptide. The Extracellular portion of the chain corresponds to Ala26–Thr340. The Fibronectin type-III 1 domain occupies Pro32 to Gly121. N-linked (GlcNAc...) asparagine glycosylation is found at Asn35, Asn59, Asn103, and Asn136. The cysteines at positions 44 and 93 are disulfide-linked. 2 disulfides stabilise this stretch: Cys132–Cys142 and Cys171–Cys183. Residues Lys224–Glu336 enclose the Fibronectin type-III 2 domain. Asn262 carries an N-linked (GlcNAc...) asparagine glycan. A WSXWS motif motif is present at residues Trp324 to Ser328. An N-linked (GlcNAc...) asparagine glycan is attached at Asn338. A helical membrane pass occupies residues Phe341–Leu364. Over Lys365 to Pro424 the chain is Cytoplasmic. The Box 1 motif motif lies at Ile371–Gly379.

Belongs to the type I cytokine receptor family. Type 5 subfamily. In terms of assembly, interleukin-13 receptor is a complex of IL4R, IL13RA1, and possibly other components. Interacts with TRAF3IP1. Interacts with IL4. As to expression, spleen, liver, thymus, heart, lung, kidney, testis, stomach, brain, skin, and colon; but not skeletal muscle.

The protein resides in the membrane. In terms of biological role, binds with low affinity to interleukin-13 (IL13). Together with IL4RA can form a functional receptor for IL13. Also serves as an alternate accessory protein to the common cytokine receptor gamma chain for interleukin-4 (IL4) signaling, but cannot replace the function of IL2RG in allowing enhanced interleukin-2 (IL2) binding activity. This is Interleukin-13 receptor subunit alpha-1 (Il13ra1) from Mus musculus (Mouse).